The following is a 227-amino-acid chain: D-lyxose/D-mannose isomerase (227 aa).

D-fructose is bound by residues Lys90, 103–110 (HFHWRKRE), His171, Glu186, and Asp193. Mn(2+)-binding residues include His103, His105, Glu110, and His171.

Belongs to the D-lyxose ketol-isomerase family. As to quaternary structure, homodimer; disulfide-linked. Dimerization is facilitated through a disulfide bond between the two monomers of the dimeric enzyme. The cofactor is Mn(2+).

It carries out the reaction D-lyxose = D-xylulose. The catalysed reaction is D-mannose = D-fructose. Sugar isomerase that catalyzes the reversible isomerization of D-lyxose to D-xylulose, and D-mannose to D-fructose. Shows similar activity toward D-lyxose and D-mannose with a turnover and catalytic efficiency for D-lyxose as a substrate only 1.1- and 1.3-fold higher than those for D-mannose, respectively. Shows weaker activity with L-gulose, D-talose, L-ribose and L-allose. Overexpression enables cell growth on the rare pentose D-lyxose as the sole carbon source. This Escherichia coli O157:H7 protein is D-lyxose/D-mannose isomerase.